A 218-amino-acid polypeptide reads, in one-letter code: Ropporin-1-like protein (218 aa).

The RIIa domain maps to 17 to 46 (PELTDILKQFTKAAIRTQPADVLQWSAGYF).

It belongs to the ropporin family. Component of the axonemal radial spoke complex 1 (RS1), at least composed of spoke head proteins RSPH1, RSPH3, RSPH9 and the cilia-specific component RSPH4A or sperm-specific component RSPH6A, spoke stalk proteins RSPH14, DNAJB13, DYDC1, ROPN1L and NME5, and the anchor protein IQUB. May interact with AKAP3. Interacts with FSCB; the interaction increases upon spermatozoa capacitation conditions. Interacts with CFAP61. Sumoylated, sumoylation decreases upon spermatozoa capacitation conditions.

Its subcellular location is the cell projection. It is found in the cilium. It localises to the flagellum. Functions as part of axonemal radial spoke complexes that play an important part in the motility of sperm and cilia. Important for male fertility. With ROPN1, involved in fibrous sheath integrity and sperm motility, plays a role in PKA-dependent signaling processes required for spermatozoa capacitation. In Bos taurus (Bovine), this protein is Ropporin-1-like protein (ROPN1L).